We begin with the raw amino-acid sequence, 439 residues long: Methionine aminopeptidase 2-1 (439 aa).

Residues 1–87 (MSGGESRSPD…DKLFPSGNFP (87 aa)) are disordered. Acidic residues predominate over residues 22–32 (GGDDEESDGDG). The segment covering 47–61 (KKRKKRNKKKSKKKS) has biased composition (basic residues). His-190 contacts substrate. A divalent metal cation is bound by residues Asp-211, Asp-222, and His-291. Residue His-299 coordinates substrate. A divalent metal cation is bound by residues Glu-324 and Glu-420.

The protein belongs to the peptidase M24A family. Methionine aminopeptidase eukaryotic type 2 subfamily. It depends on Co(2+) as a cofactor. The cofactor is Zn(2+). Mn(2+) is required as a cofactor. Fe(2+) serves as cofactor.

Its subcellular location is the cytoplasm. The enzyme catalyses Release of N-terminal amino acids, preferentially methionine, from peptides and arylamides.. Cotranslationally removes the N-terminal methionine from nascent proteins. The N-terminal methionine is often cleaved when the second residue in the primary sequence is small and uncharged (Met-Ala-, Cys, Gly, Pro, Ser, Thr, or Val). The chain is Methionine aminopeptidase 2-1 from Chaetomium globosum (strain ATCC 6205 / CBS 148.51 / DSM 1962 / NBRC 6347 / NRRL 1970) (Soil fungus).